Consider the following 205-residue polypeptide: Fe/S biogenesis protein NfuA (205 aa).

Residues C162 and C165 each contribute to the [4Fe-4S] cluster site.

Belongs to the NfuA family. As to quaternary structure, homodimer. [4Fe-4S] cluster is required as a cofactor.

Functionally, involved in iron-sulfur cluster biogenesis. Binds a 4Fe-4S cluster, can transfer this cluster to apoproteins, and thereby intervenes in the maturation of Fe/S proteins. Could also act as a scaffold/chaperone for damaged Fe/S proteins. The chain is Fe/S biogenesis protein NfuA from Blochmanniella floridana.